Here is a 323-residue protein sequence, read N- to C-terminus: Pectate lyase A (323 aa).

Residues 1–31 (MTNFKWIVAAAGLLFGQVLAAPTATSTHAKR) form the signal peptide. N-linked (GlcNAc...) asparagine glycosylation occurs at Asn95. 3 residues coordinate Ca(2+): Asp136, Asp165, and Asp169. The active site involves Arg222.

Belongs to the polysaccharide lyase 1 family. The cofactor is Ca(2+).

The protein resides in the secreted. The enzyme catalyses Eliminative cleavage of (1-&gt;4)-alpha-D-galacturonan to give oligosaccharides with 4-deoxy-alpha-D-galact-4-enuronosyl groups at their non-reducing ends.. Pectinolytic enzyme consist of four classes of enzymes: pectin lyase, polygalacturonase, pectin methylesterase and rhamnogalacturonase. Among pectinolytic enzymes, pectin lyase is the most important in depolymerization of pectin, since it cleaves internal glycosidic bonds of highly methylated pectins. Favors pectate, the anion, over pectin, the methyl ester. This is Pectate lyase A (plyA) from Aspergillus niger.